The sequence spans 158 residues: Transcription elongation factor GreA (158 aa).

The protein belongs to the GreA/GreB family.

Functionally, necessary for efficient RNA polymerase transcription elongation past template-encoded arresting sites. The arresting sites in DNA have the property of trapping a certain fraction of elongating RNA polymerases that pass through, resulting in locked ternary complexes. Cleavage of the nascent transcript by cleavage factors such as GreA or GreB allows the resumption of elongation from the new 3'terminus. GreA releases sequences of 2 to 3 nucleotides. The chain is Transcription elongation factor GreA from Methylobacterium nodulans (strain LMG 21967 / CNCM I-2342 / ORS 2060).